The chain runs to 781 residues: MAPYSLLVTRLQKALGVRQYHVASVLCQRAKVAMSHFEPHEYIRYDLLEKNIDIVRKRLNRPLTLSEKIVYGHLDDPANQEIERGKTYLRLRPDRVAMQDATAQMAMLQFISSGLPKVAVPSTIHCDHLIEAQLGGEKDLRRAKDINQEVYNFLATAGAKYGVGFWRPGSGIIHQIILENYAYPGVLLIGTDSHTPNGGGLGGICIGVGGADAVDVMAGIPWELKCPKVIGVKLTGSLSGWTSPKDVILKVAGILTVKGGTGAIVEYHGPGVDSISCTGMATICNMGAEIGATTSVFPYNHRMKKYLSKTGRADIANLADEFKDHLVPDPGCHYDQVIEINLSELKPHINGPFTPDLAHPVAEVGSVAEKEGWPLDIRVGLIGSCTNSSYEDMGRSAAVAKQALAHGLKCKSQFTITPGSEQIRATIERDGYAQVLRDVGGIVLANACGPCIGQWDRKDIKKGEKNTIVTSYNRNFTGRNDANPETHAFVTSPEIVTALAIAGTLKFNPETDFLTGKDGKKFKLEAPDADELPRAEFDPGQDTYQHPPKDSSGQRVDVSPTSQRLQLLEPFDKWDGKDLEDLQILIKVKGKCTTDHISAAGPWLKFRGHLDNISNNLLIGAINIENRKANSVRNAVTQEFGPVPDTARYYKQHGIRWVVIGDENYGEGSSREHRALEPRHLGGRAIITKSFARIHETNLKKQGLLPLTFADPADYNKIHPVDKLTIQGLKDFAPGKPLKCIIKHPNGTQETILLNHTFNETQIEWFRAGSALNRMKELQQK.

A mitochondrion-targeting transit peptide spans 1–27 (MAPYSLLVTRLQKALGVRQYHVASVLC). Residue Gln28 is modified to Pyrrolidone carboxylic acid. Lys31 is subject to N6-succinyllysine. Position 50 is an N6-acetyllysine; alternate (Lys50). An N6-succinyllysine; alternate modification is found at Lys50. Residue Gln99 participates in substrate binding. 2 positions are modified to N6-acetyllysine; alternate: Lys138 and Lys144. An N6-succinyllysine; alternate mark is found at Lys138 and Lys144. 192–194 (DSH) provides a ligand contact to substrate. Lys233 carries the N6-acetyllysine; alternate modification. Position 233 is an N6-succinyllysine; alternate (Lys233). Cys385 provides a ligand contact to [4Fe-4S] cluster. Lys411 is modified (N6-succinyllysine). Residues Cys448 and Cys451 each coordinate [4Fe-4S] cluster. Substrate contacts are provided by Arg474 and Arg479. N6-acetyllysine; alternate occurs at positions 517 and 523. N6-succinyllysine; alternate is present on residues Lys517 and Lys523. Residues 524–537 (LEAPDADELPRAEF) show a composition bias toward basic and acidic residues. The segment at 524 to 561 (LEAPDADELPRAEFDPGQDTYQHPPKDSSGQRVDVSPT) is disordered. Position 549 is an N6-succinyllysine (Lys549). Residues 551 to 561 (SSGQRVDVSPT) are compositionally biased toward polar residues. Residue Ser559 is modified to Phosphoserine. An N6-acetyllysine; alternate modification is found at Lys573. An N6-succinyllysine; alternate modification is found at Lys573. An N6-succinyllysine mark is found at Lys577 and Lys591. N6-acetyllysine; alternate is present on Lys605. An N6-succinyllysine; alternate modification is found at Lys605. Arg607 contributes to the substrate binding site. At Lys628 the chain carries N6-succinyllysine. Ser670 is modified (phosphoserine). 670 to 671 (SR) provides a ligand contact to substrate. Position 689 is an N6-succinyllysine (Lys689). Residues Lys723 and Lys730 each carry the N6-acetyllysine; alternate modification. An N6-succinyllysine; alternate mark is found at Lys723 and Lys730. 3 positions are modified to N6-acetyllysine: Lys736, Lys739, and Lys743.

Belongs to the aconitase/IPM isomerase family. Monomer. It depends on [4Fe-4S] cluster as a cofactor. In terms of processing, forms covalent cross-links mediated by transglutaminase TGM2, between a glutamine and the epsilon-amino group of a lysine residue, forming homopolymers and heteropolymers.

The protein resides in the mitochondrion. It carries out the reaction citrate = D-threo-isocitrate. It participates in carbohydrate metabolism; tricarboxylic acid cycle; isocitrate from oxaloacetate: step 2/2. In terms of biological role, catalyzes the isomerization of citrate to isocitrate via cis-aconitate. This Sus scrofa (Pig) protein is Aconitate hydratase, mitochondrial (ACO2).